Consider the following 234-residue polypeptide: Glucosamine-6-phosphate deaminase (234 aa).

Asp62 acts as the Proton acceptor; for enolization step in catalysis. Asn128 functions as the For ring-opening step in the catalytic mechanism. His130 acts as the Proton acceptor; for ring-opening step in catalysis. Glu135 acts as the For ring-opening step in catalysis.

The protein belongs to the glucosamine/galactosamine-6-phosphate isomerase family. NagB subfamily.

The enzyme catalyses alpha-D-glucosamine 6-phosphate + H2O = beta-D-fructose 6-phosphate + NH4(+). It participates in amino-sugar metabolism; N-acetylneuraminate degradation; D-fructose 6-phosphate from N-acetylneuraminate: step 5/5. Its function is as follows. Catalyzes the reversible isomerization-deamination of glucosamine 6-phosphate (GlcN6P) to form fructose 6-phosphate (Fru6P) and ammonium ion. This Streptococcus pyogenes serotype M1 protein is Glucosamine-6-phosphate deaminase.